A 182-amino-acid polypeptide reads, in one-letter code: Epididymal-specific lipocalin-10 (182 aa).

A signal peptide spans 1 to 19 (MKLEMALSIALALAVVSWT). N-linked (GlcNAc...) asparagine glycans are attached at residues N31 and N144. A disulfide bridge links C85 with C176. K165 is subject to N6-acetyllysine.

The protein belongs to the calycin superfamily. Lipocalin family. In terms of tissue distribution, expressed in epididymis.

The protein localises to the secreted. In terms of biological role, may play a role in male fertility. May act as a retinoid carrier protein within the epididymis. This chain is Epididymal-specific lipocalin-10 (Lcn10), found in Mus musculus (Mouse).